We begin with the raw amino-acid sequence, 241 residues long: Phosphatidylcholine synthase (241 aa).

Topologically, residues 1-15 (MKIFNYKRVPYAEIR) are cytoplasmic. The chain crosses the membrane as a helical span at residues 16–36 (AFSVHILTASGSFLAFLGVVA). Residues 37–41 (ASEHR) lie on the Periplasmic side of the membrane. The chain crosses the membrane as a helical span at residues 42-62 (FVDMFWWLGLALLVDGIDGPI). Over 63-76 (ARKVRVKEVLPNWS) the chain is Cytoplasmic. Residues 77–97 (GDTLDNIIDYVTYVLLPAFAL) traverse the membrane as a helical segment. Over 98–100 (YQS) the chain is Periplasmic. The chain crosses the membrane as a helical span at residues 101-121 (GMIGEPLSFVAAGMIVVSSAI). The Cytoplasmic portion of the chain corresponds to 122–133 (YYADMGMKTDEY). Residues 134 to 154 (FFSGFPVVWNMVVFTLFVMDA) traverse the membrane as a helical segment. Residues 155 to 159 (SATTA) are Periplasmic-facing. Residues 160–180 (MTVVTVSVFLTFLPINFLHPV) traverse the membrane as a helical segment. Residues 181 to 187 (RVKRLRP) are Cytoplasmic-facing. The chain crosses the membrane as a helical span at residues 188–208 (LNLLVVAIWCALGGYALLMHF). At 209–214 (ETPTWA) the chain is on the periplasmic side. The helical transmembrane segment at 215 to 235 (VIAFVASGIYLYCIGGILQFF) threads the bilayer. At 236-241 (PSLGAK) the chain is on the cytoplasmic side.

The protein belongs to the CDP-alcohol phosphatidyltransferase class-I family. Mn(2+) is required as a cofactor.

It localises to the cell inner membrane. The catalysed reaction is a CDP-1,2-diacyl-sn-glycerol + choline = a 1,2-diacyl-sn-glycero-3-phosphocholine + CMP + H(+). Condenses choline with CDP-diglyceride to produce phosphatidylcholine and CMP. Affects motility, biofilm formation and virulence of this bacterium when there is a complete loss of phosphatidylcholine formation due to absence of both the synthase (pcs) and the methylation (pmtA) pathways. In Agrobacterium fabrum (strain C58 / ATCC 33970) (Agrobacterium tumefaciens (strain C58)), this protein is Phosphatidylcholine synthase.